The following is a 613-amino-acid chain: Chaperone protein DnaK (613 aa).

Positions 578–613 are disordered; that stretch reads MYQSQATQGTSQNSSQNNNSQNNNGDTVDADFKESK. Residues 580-602 are compositionally biased toward low complexity; the sequence is QSQATQGTSQNSSQNNNSQNNNG.

Belongs to the heat shock protein 70 family.

Functionally, acts as a chaperone. This chain is Chaperone protein DnaK, found in Picrophilus torridus (strain ATCC 700027 / DSM 9790 / JCM 10055 / NBRC 100828 / KAW 2/3).